The primary structure comprises 461 residues: Mannose-6-phosphate isomerase (461 aa).

Zn(2+) contacts are provided by glutamine 107, histidine 109, glutamate 134, and histidine 291. The active site involves arginine 310.

The protein belongs to the mannose-6-phosphate isomerase type 1 family. Zn(2+) is required as a cofactor.

It localises to the cytoplasm. It catalyses the reaction D-mannose 6-phosphate = D-fructose 6-phosphate. Its pathway is nucleotide-sugar biosynthesis; GDP-alpha-D-mannose biosynthesis; alpha-D-mannose 1-phosphate from D-fructose 6-phosphate: step 1/2. In terms of biological role, involved in the synthesis of the GDP-mannose and dolichol-phosphate-mannose required for a number of critical mannosyl transfer reactions. This is Mannose-6-phosphate isomerase (manA) from Emericella nidulans (strain FGSC A4 / ATCC 38163 / CBS 112.46 / NRRL 194 / M139) (Aspergillus nidulans).